The sequence spans 416 residues: Gamma-glutamyl phosphate reductase (416 aa).

The protein belongs to the gamma-glutamyl phosphate reductase family.

It is found in the cytoplasm. The enzyme catalyses L-glutamate 5-semialdehyde + phosphate + NADP(+) = L-glutamyl 5-phosphate + NADPH + H(+). The protein operates within amino-acid biosynthesis; L-proline biosynthesis; L-glutamate 5-semialdehyde from L-glutamate: step 2/2. Its function is as follows. Catalyzes the NADPH-dependent reduction of L-glutamate 5-phosphate into L-glutamate 5-semialdehyde and phosphate. The product spontaneously undergoes cyclization to form 1-pyrroline-5-carboxylate. This Streptococcus equi subsp. zooepidemicus (strain MGCS10565) protein is Gamma-glutamyl phosphate reductase.